The following is a 389-amino-acid chain: Succinate--CoA ligase [ADP-forming] subunit beta (389 aa).

Residues K46, 53–55 (GRG), E99, C102, and E107 contribute to the ATP site. Residues N199 and D213 each coordinate Mg(2+). Substrate-binding positions include N264 and 321–323 (GIV).

It belongs to the succinate/malate CoA ligase beta subunit family. As to quaternary structure, heterotetramer of two alpha and two beta subunits. Mg(2+) is required as a cofactor.

The enzyme catalyses succinate + ATP + CoA = succinyl-CoA + ADP + phosphate. The catalysed reaction is GTP + succinate + CoA = succinyl-CoA + GDP + phosphate. It participates in carbohydrate metabolism; tricarboxylic acid cycle; succinate from succinyl-CoA (ligase route): step 1/1. Functionally, succinyl-CoA synthetase functions in the citric acid cycle (TCA), coupling the hydrolysis of succinyl-CoA to the synthesis of either ATP or GTP and thus represents the only step of substrate-level phosphorylation in the TCA. The beta subunit provides nucleotide specificity of the enzyme and binds the substrate succinate, while the binding sites for coenzyme A and phosphate are found in the alpha subunit. The protein is Succinate--CoA ligase [ADP-forming] subunit beta of Haemophilus influenzae (strain 86-028NP).